We begin with the raw amino-acid sequence, 541 residues long: Chaperonin GroEL 2 (541 aa).

ATP contacts are provided by residues 29 to 32 (TLGP), 86 to 90 (DGTTT), Gly-413, 476 to 478 (NAA), and Asp-492.

Belongs to the chaperonin (HSP60) family. As to quaternary structure, forms a cylinder of 14 subunits composed of two heptameric rings stacked back-to-back. Interacts with the co-chaperonin GroES.

Its subcellular location is the secreted. It localises to the capsule. It is found in the cell surface. The protein resides in the cell wall. The catalysed reaction is ATP + H2O + a folded polypeptide = ADP + phosphate + an unfolded polypeptide.. In terms of biological role, together with its co-chaperonin GroES, plays an essential role in assisting protein folding. The GroEL-GroES system forms a nano-cage that allows encapsulation of the non-native substrate proteins and provides a physical environment optimized to promote and accelerate protein folding. This is Chaperonin GroEL 2 from Mycobacterium sp. (strain KMS).